Reading from the N-terminus, the 297-residue chain is uncharacterized protein (297 aa).

Residues 136–174 form a disordered region; it reads FSETNDDSTDEEIDTPINDDDDDDKNNDADNNDINEDNK. The span at 139 to 170 shows a compositional bias: acidic residues; sequence TNDDSTDEEIDTPINDDDDDDKNNDADNNDIN.

To S.pombe SpBC725.03.

This is an uncharacterized protein from Saccharomyces cerevisiae (strain ATCC 204508 / S288c) (Baker's yeast).